Here is a 468-residue protein sequence, read N- to C-terminus: Uronate isomerase (468 aa).

It belongs to the metallo-dependent hydrolases superfamily. Uronate isomerase family.

The catalysed reaction is D-glucuronate = D-fructuronate. The enzyme catalyses aldehydo-D-galacturonate = keto-D-tagaturonate. It functions in the pathway carbohydrate metabolism; pentose and glucuronate interconversion. This Phocaeicola vulgatus (strain ATCC 8482 / DSM 1447 / JCM 5826 / CCUG 4940 / NBRC 14291 / NCTC 11154) (Bacteroides vulgatus) protein is Uronate isomerase.